The chain runs to 311 residues: Acetyl-coenzyme A carboxylase carboxyl transferase subunit alpha (311 aa).

The CoA carboxyltransferase C-terminal domain maps to Asn36–Lys286.

It belongs to the AccA family. As to quaternary structure, acetyl-CoA carboxylase is a heterohexamer composed of biotin carboxyl carrier protein (AccB), biotin carboxylase (AccC) and two subunits each of ACCase subunit alpha (AccA) and ACCase subunit beta (AccD).

The protein localises to the cytoplasm. It carries out the reaction N(6)-carboxybiotinyl-L-lysyl-[protein] + acetyl-CoA = N(6)-biotinyl-L-lysyl-[protein] + malonyl-CoA. It functions in the pathway lipid metabolism; malonyl-CoA biosynthesis; malonyl-CoA from acetyl-CoA: step 1/1. Component of the acetyl coenzyme A carboxylase (ACC) complex. First, biotin carboxylase catalyzes the carboxylation of biotin on its carrier protein (BCCP) and then the CO(2) group is transferred by the carboxyltransferase to acetyl-CoA to form malonyl-CoA. In Sulfurimonas denitrificans (strain ATCC 33889 / DSM 1251) (Thiomicrospira denitrificans (strain ATCC 33889 / DSM 1251)), this protein is Acetyl-coenzyme A carboxylase carboxyl transferase subunit alpha.